The sequence spans 336 residues: Cinnamoyl-CoA reductase 2 (336 aa).

Residues 21 to 27, Arg-46, Lys-52, 72 to 73, 92 to 94, Tyr-165, Lys-169, 192 to 195, and Ser-207 each bind NADP(+); these read GAGGFIA, DL, TAS, and PVVV. Residues Cys-158 and Cys-166 are joined by a disulfide bond. The active-site Proton donor is the Lys-169.

This sequence belongs to the NAD(P)-dependent epimerase/dehydratase family. Dihydroflavonol-4-reductase subfamily. Post-translationally, the formation of a reversible disulfide bond reduces activity by perturbing the positioning of nearby catalytic residues. As to expression, mainly expressed in roots and stems, especially at the second internode and, to a lower extent, in leaves and flowers. Localized in vascular elements, with weaker expression in the interfascicular (xylem fiber) region.

It is found in the cytoplasm. The catalysed reaction is (E)-coniferaldehyde + NADP(+) + CoA = (E)-feruloyl-CoA + NADPH + H(+). The enzyme catalyses (E)-4-coumaraldehyde + NADP(+) + CoA = (E)-4-coumaroyl-CoA + NADPH + H(+). It catalyses the reaction (E)-sinapaldehyde + NADP(+) + CoA = (E)-sinapoyl-CoA + NADPH + H(+). It carries out the reaction (E)-cinnamaldehyde + NADP(+) + CoA = (E)-cinnamoyl-CoA + NADPH + H(+). The catalysed reaction is (E)-caffeyl aldehyde + NADP(+) + CoA = (E)-caffeoyl-CoA + NADPH + H(+). It participates in aromatic compound metabolism; phenylpropanoid biosynthesis. Involved in the latter stages of lignin biosynthesis. Catalyzes one of the last steps of monolignol biosynthesis, the conversion of cinnamoyl-CoAs into their corresponding cinnamaldehydes. Mediates the conversion of caffeoyl-CoA and coumaroyl-CoA to caffaldehyde and coumaraldehyde, respectively. Also active, with a lower efficiency, toward feruloyl-CoA and sinapoyl-CoA. Involved in the production of floral volatile phenylpropanoids in flowers of fragrant cultivars from cinnamic acid, a common precursor with the anthocyanin biosynthesis pathway involved in flower pigmentation. This is Cinnamoyl-CoA reductase 2 from Medicago truncatula (Barrel medic).